Here is a 91-residue protein sequence, read N- to C-terminus: LYR motif-containing protein 4 (91 aa).

Pantetheine 4'-phosphate-binding residues include Arg6 and Lys44. N6-succinyllysine is present on Lys47.

This sequence belongs to the complex I LYR family. In terms of assembly, homodimer. Component of the mitochondrial core iron-sulfur cluster (ISC) complex composed of NFS1, LYRM4, NDUFAB1, ISCU, FXN, and FDX2; this complex is a heterohexamer containing two copies of each monomer. Component of the cyteine desulfurase complex composed of NFS1, LYRM4 and NDUFAB1; this complex contributes to the stability and cysteine desulfurase activity of NFS1. Interacts with FXN; this interaction is nickel-dependent. Interacts with the cytoplasmic form of NFS1; the complex increases the stability of NFS1. Forms a complex with the cytoplasmic form of NFS1; this complex increases the stability and cysteine desulfurase activity of NFS1. Interacts with NFS1. Component of a complex composed of FXN, NFS1, LYRM4 and ISCU.

The protein resides in the mitochondrion. Its subcellular location is the nucleus. It functions in the pathway cofactor biosynthesis; iron-sulfur cluster biosynthesis. Its function is as follows. Stabilizing factor, of the core iron-sulfur cluster (ISC) assembly complex, that regulates, in association with NDUFAB1, the stability and the cysteine desulfurase activity of NFS1 and participates in the [2Fe-2S] clusters assembly on the scaffolding protein ISCU. The core iron-sulfur cluster (ISC) assembly complex is involved in the de novo synthesis of a [2Fe-2S] cluster, the first step of the mitochondrial iron-sulfur protein biogenesis. This process is initiated by the cysteine desulfurase complex (NFS1:LYRM4:NDUFAB1) that produces persulfide which is delivered on the scaffold protein ISCU in a FXN-dependent manner. Then this complex is stabilized by FDX2 which provides reducing equivalents to accomplish the [2Fe-2S] cluster assembly. Finally, the [2Fe-2S] cluster is transferred from ISCU to chaperone proteins, including HSCB, HSPA9 and GLRX5. May also participates in the iron-sulfur protein biogenesis in the cytoplasm through its interaction with the cytoplasmic form of NFS1. The protein is LYR motif-containing protein 4 of Mus musculus (Mouse).